Here is a 215-residue protein sequence, read N- to C-terminus: Orotate phosphoribosyltransferase (215 aa).

5-phospho-alpha-D-ribose 1-diphosphate is bound at residue Lys-25. Residue 33 to 34 participates in orotate binding; sequence FF. Residues 71–72, Arg-98, Lys-99, Lys-102, His-104, and 124–132 each bind 5-phospho-alpha-D-ribose 1-diphosphate; these read YK and DDVITAGTA. Residues Thr-128 and Arg-156 each contribute to the orotate site.

This sequence belongs to the purine/pyrimidine phosphoribosyltransferase family. PyrE subfamily. As to quaternary structure, homodimer.

The catalysed reaction is orotidine 5'-phosphate + diphosphate = orotate + 5-phospho-alpha-D-ribose 1-diphosphate. It participates in pyrimidine metabolism; UMP biosynthesis via de novo pathway; UMP from orotate: step 1/2. Its function is as follows. Catalyzes the transfer of a ribosyl phosphate group from 5-phosphoribose 1-diphosphate to orotate, leading to the formation of orotidine monophosphate (OMP). This is Orotate phosphoribosyltransferase (ura5) from Schizosaccharomyces pombe (strain 972 / ATCC 24843) (Fission yeast).